Consider the following 88-residue polypeptide: MTFLARLFGEKKKTAEIAKNRLSLLIAHERGDGVPKVDFLPALQRELIEVISKYVPVNSDDIKVHLDKQNNYEVLEVNIVLPEQNQGR.

The protein belongs to the MinE family.

Its function is as follows. Prevents the cell division inhibition by proteins MinC and MinD at internal division sites while permitting inhibition at polar sites. This ensures cell division at the proper site by restricting the formation of a division septum at the midpoint of the long axis of the cell. The polypeptide is Cell division topological specificity factor (Aromatoleum aromaticum (strain DSM 19018 / LMG 30748 / EbN1) (Azoarcus sp. (strain EbN1))).